A 99-amino-acid chain; its full sequence is Putative protein YgeP (99 aa).

The chain is Putative protein YgeP (ygeP) from Escherichia coli (strain K12).